Consider the following 282-residue polypeptide: Nudix hydrolase 7 (282 aa).

The Nudix hydrolase domain occupies 101 to 233; it reads SHVVGAGALV…KNEMFKFMAN (133 aa). Residues 139–160 carry the Nudix box motif; it reads GVINEGEDIWTGVAREVEEETG. Positions 154 and 158 each coordinate Mg(2+).

Belongs to the Nudix hydrolase family. As to quaternary structure, homodimer. Interacts with RACK1A, GG1 and GG2. Mg(2+) serves as cofactor. As to expression, expressed in stems, leaves, roots, flowers and siliques.

The protein localises to the nucleus. Its subcellular location is the cytoplasm. The protein resides in the cell membrane. It catalyses the reaction ADP-D-ribose + H2O = D-ribose 5-phosphate + AMP + 2 H(+). It carries out the reaction NAD(+) + H2O = beta-nicotinamide D-ribonucleotide + AMP + 2 H(+). The catalysed reaction is NADH + H2O = reduced beta-nicotinamide D-ribonucleotide + AMP + 2 H(+). Not inhibited by fluoride. In terms of biological role, mediates the hydrolysis of some nucleoside diphosphate derivatives. Can use both NADH and ADP-ribose as substrates, but not 8-oxo-dGTP, cyclic ADP-ribose, GDP-mannose, UDP-glucose, ATP, or GTP. Exerts negative control of EDS1 signaling. This is Nudix hydrolase 7 (NUDT7) from Arabidopsis thaliana (Mouse-ear cress).